Consider the following 309-residue polypeptide: Beta-ketoacyl-[acyl-carrier-protein] synthase III (309 aa).

Residues cysteine 111 and histidine 236 contribute to the active site. The tract at residues 237–241 (QANVR) is ACP-binding. The active site involves asparagine 266.

The protein belongs to the thiolase-like superfamily. FabH family. In terms of assembly, homodimer.

The protein resides in the cytoplasm. It carries out the reaction malonyl-[ACP] + acetyl-CoA + H(+) = 3-oxobutanoyl-[ACP] + CO2 + CoA. The protein operates within lipid metabolism; fatty acid biosynthesis. Functionally, catalyzes the condensation reaction of fatty acid synthesis by the addition to an acyl acceptor of two carbons from malonyl-ACP. Catalyzes the first condensation reaction which initiates fatty acid synthesis and may therefore play a role in governing the total rate of fatty acid production. Possesses both acetoacetyl-ACP synthase and acetyl transacylase activities. Its substrate specificity determines the biosynthesis of branched-chain and/or straight-chain of fatty acids. In Aquifex aeolicus (strain VF5), this protein is Beta-ketoacyl-[acyl-carrier-protein] synthase III.